Reading from the N-terminus, the 347-residue chain is D-alanine--D-alanine ligase (347 aa).

The 210-residue stretch at 133 to 342 folds into the ATP-grasp domain; sequence KQAFAQASLP…FPDLVHRLIQ (210 aa). 169 to 224 provides a ligand contact to ATP; that stretch reads ETELGYPCFVKPANLGSSVGIAKVRDRAELEAALDQAAALDRRLIIEAAIDNPREV. Mg(2+) contacts are provided by Asp296, Glu309, and Asn311.

It belongs to the D-alanine--D-alanine ligase family. The cofactor is Mg(2+). Requires Mn(2+) as cofactor.

It localises to the cytoplasm. It carries out the reaction 2 D-alanine + ATP = D-alanyl-D-alanine + ADP + phosphate + H(+). It participates in cell wall biogenesis; peptidoglycan biosynthesis. Cell wall formation. This is D-alanine--D-alanine ligase from Synechococcus elongatus (strain ATCC 33912 / PCC 7942 / FACHB-805) (Anacystis nidulans R2).